A 201-amino-acid polypeptide reads, in one-letter code: Peptidyl-tRNA hydrolase (201 aa).

Position 15 (Tyr-15) interacts with tRNA. His-20 functions as the Proton acceptor in the catalytic mechanism. Tyr-66, Asn-68, and Asn-114 together coordinate tRNA.

The protein belongs to the PTH family. Monomer.

It localises to the cytoplasm. It catalyses the reaction an N-acyl-L-alpha-aminoacyl-tRNA + H2O = an N-acyl-L-amino acid + a tRNA + H(+). Its function is as follows. Hydrolyzes ribosome-free peptidyl-tRNAs (with 1 or more amino acids incorporated), which drop off the ribosome during protein synthesis, or as a result of ribosome stalling. In terms of biological role, catalyzes the release of premature peptidyl moieties from peptidyl-tRNA molecules trapped in stalled 50S ribosomal subunits, and thus maintains levels of free tRNAs and 50S ribosomes. The sequence is that of Peptidyl-tRNA hydrolase from Burkholderia mallei (strain NCTC 10247).